The sequence spans 100 residues: Apolipoprotein C-II (100 aa).

The signal sequence occupies residues 1 to 25 (MDARSLLLLWLLLPLLLLLGCEVQG). The lipid binding stretch occupies residues 65 to 73 (AVDETIRDI). A lipoprotein lipase cofactor region spans residues 77-100 (GSAAISTYTGILTDQILTMLQGKQ).

This sequence belongs to the apolipoprotein C2 family. Post-translationally, proapolipoprotein C-II is synthesized as a sialic acid containing glycoprotein which is subsequently desialylated prior to its proteolytic processing. In terms of processing, proapolipoprotein C-II, the major form found in plasma undergoes proteolytic cleavage of its N-terminal hexapeptide to generate apolipoprotein C-II, which occurs as the minor form in plasma. Liver.

The protein resides in the secreted. Functionally, component of chylomicrons, very low-density lipoproteins (VLDL), low-density lipoproteins (LDL), and high-density lipoproteins (HDL) in plasma. Plays an important role in lipoprotein metabolism as an activator of lipoprotein lipase. Both proapolipoprotein C-II and apolipoprotein C-II can activate lipoprotein lipase. This Cavia porcellus (Guinea pig) protein is Apolipoprotein C-II (APOC2).